Here is a 484-residue protein sequence, read N- to C-terminus: Catalase (484 aa).

Methionine 53 carries the post-translational modification Methionine sulfone. Residues histidine 54 and asparagine 127 contribute to the active site. Position 337 (tyrosine 337) interacts with heme.

As to quaternary structure, homotetramer. Heme is required as a cofactor. NADP(+) serves as cofactor.

It is found in the cytoplasm. The catalysed reaction is 2 H2O2 = O2 + 2 H2O. Its function is as follows. Decomposes hydrogen peroxide into water and oxygen; serves to protect cells from the toxic effects of hydrogen peroxide. The chain is Catalase (katA) from Proteus mirabilis.